A 364-amino-acid chain; its full sequence is Aminomethyltransferase (364 aa).

The protein belongs to the GcvT family. The glycine cleavage system is composed of four proteins: P, T, L and H.

It catalyses the reaction N(6)-[(R)-S(8)-aminomethyldihydrolipoyl]-L-lysyl-[protein] + (6S)-5,6,7,8-tetrahydrofolate = N(6)-[(R)-dihydrolipoyl]-L-lysyl-[protein] + (6R)-5,10-methylene-5,6,7,8-tetrahydrofolate + NH4(+). The glycine cleavage system catalyzes the degradation of glycine. The chain is Aminomethyltransferase from Proteus mirabilis (strain HI4320).